The following is a 408-amino-acid chain: Histidine--tRNA ligase (408 aa).

It belongs to the class-II aminoacyl-tRNA synthetase family. As to quaternary structure, homodimer.

It is found in the cytoplasm. The catalysed reaction is tRNA(His) + L-histidine + ATP = L-histidyl-tRNA(His) + AMP + diphosphate + H(+). The protein is Histidine--tRNA ligase of Campylobacter jejuni subsp. jejuni serotype O:23/36 (strain 81-176).